Here is a 536-residue protein sequence, read N- to C-terminus: Organic anion transporter 3 (536 aa).

Residues 1 to 11 (MTFSEILDRVG) lie on the Cytoplasmic side of the membrane. Serine 4 carries the phosphoserine modification. The helical transmembrane segment at 12-32 (SMGPFQYLHVTLLALPVLGIA) threads the bilayer. At 33 to 123 (NHNLLQIFTA…LVCSSNKLKE (91 aa)) the chain is on the extracellular side. N-linked (GlcNAc...) asparagine glycans are attached at residues asparagine 81 and asparagine 86. A helical transmembrane segment spans residues 124 to 144 (MAQSIFMAGILVGGPVIGELS). Over 145–158 (DRFGRKPILTWSYL) the chain is Cytoplasmic. Residues 159–179 (MLAASGSGAAFSPSLPVYMIF) traverse the membrane as a helical segment. Position 180 (arginine 180) is a topological domain, extracellular. A helical membrane pass occupies residues 181–201 (FLCGCSISGISLSTVILNVEW). Topologically, residues 202-212 (VPTSMRAISST) are cytoplasmic. A helical membrane pass occupies residues 213–233 (SIGYCYTIGQFILSGLAYAIP). Residues 234-236 (QWR) lie on the Extracellular side of the membrane. A helical transmembrane segment spans residues 237–257 (WLQLTSSAPFFIFSLLSWWVP). The Cytoplasmic portion of the chain corresponds to 258–327 (ESIRWLVLSG…FRVSILRRVT (70 aa)). The helical transmembrane segment at 328-348 (FCLSLAWFSTGFAYYSLAMGV) threads the bilayer. Topologically, residues 349 to 354 (EEFGVN) are extracellular. The helical transmembrane segment at 355–375 (IYILQIIFGGVDIPAKFITIL) threads the bilayer. Residues 376–383 (SLSYLGRR) are Cytoplasmic-facing. Residues 384–404 (ITQSFLLLLAGGAILALIFVP) traverse the membrane as a helical segment. At 405–411 (SEMQLLR) the chain is on the extracellular side. The chain crosses the membrane as a helical span at residues 412–432 (TALAVFGKGCLSGSFSCLFLY). The Cytoplasmic portion of the chain corresponds to 433 to 471 (TSELYPTVLRQTGMGISNVWARVGSMIAPLVKITGELQP). The helical transmembrane segment at 472-492 (FIPNVIFGTTALLGGSAAFFL) threads the bilayer. At 493 to 536 (LETLNRPLPETIEDIQNWHKQVQKTKQESEAEKASQIIPLKTGG) the chain is on the extracellular side. Positions 515 to 536 (QKTKQESEAEKASQIIPLKTGG) are disordered.

The protein belongs to the major facilitator (TC 2.A.1) superfamily. Organic cation transporter (TC 2.A.1.19) family. In terms of tissue distribution, expressed in the liver, brain, kidney, choroid plexus and weakly in the eye. Moderately expressed (at protein level) in the brain capillary endothelial cells (BCEC).

It localises to the basolateral cell membrane. It carries out the reaction estrone 3-sulfate(out) + glutarate(in) = estrone 3-sulfate(in) + glutarate(out). It catalyses the reaction estrone 3-sulfate(in) + 2-oxoglutarate(out) = estrone 3-sulfate(out) + 2-oxoglutarate(in). The catalysed reaction is glutarate(in) + 2-oxoglutarate(out) = glutarate(out) + 2-oxoglutarate(in). The enzyme catalyses urate(in) + 2-oxoglutarate(out) = urate(out) + 2-oxoglutarate(in). It carries out the reaction taurocholate(out) + glutarate(in) = taurocholate(in) + glutarate(out). It catalyses the reaction dehydroepiandrosterone 3-sulfate(out) + glutarate(in) = dehydroepiandrosterone 3-sulfate(in) + glutarate(out). The catalysed reaction is prostaglandin F2alpha(out) + glutarate(in) = prostaglandin F2alpha(in) + glutarate(out). The enzyme catalyses prostaglandin F2alpha(out) + 2-oxoglutarate(in) = prostaglandin F2alpha(in) + 2-oxoglutarate(out). It carries out the reaction (R)-carnitine(out) + 2-oxoglutarate(in) = (R)-carnitine(in) + 2-oxoglutarate(out). It catalyses the reaction glutarate(in) + (R)-carnitine(out) = glutarate(out) + (R)-carnitine(in). The catalysed reaction is prostaglandin E2(out) + 2-oxoglutarate(in) = prostaglandin E2(in) + 2-oxoglutarate(out). The enzyme catalyses prostaglandin E2(out) + glutarate(in) = prostaglandin E2(in) + glutarate(out). It carries out the reaction urate(in) + glutarate(out) = urate(out) + glutarate(in). It catalyses the reaction taurocholate(out) + 2-oxoglutarate(in) = taurocholate(in) + 2-oxoglutarate(out). The catalysed reaction is dehydroepiandrosterone 3-sulfate(out) + 2-oxoglutarate(in) = dehydroepiandrosterone 3-sulfate(in) + 2-oxoglutarate(out). The enzyme catalyses kynurenate(out) + a dicarboxylate(in) = kynurenate(in) + a dicarboxylate(out). It carries out the reaction (indol-3-yl)acetate(out) + a dicarboxylate(in) = (indol-3-yl)acetate(in) + a dicarboxylate(out). It catalyses the reaction indoxyl sulfate(out) + a dicarboxylate(in) = indoxyl sulfate(in) + a dicarboxylate(out). The catalysed reaction is N-benzoylglycine(out) + a dicarboxylate(in) = N-benzoylglycine(in) + a dicarboxylate(out). The enzyme catalyses 3-carboxy-4-methyl-5-propyl-2-furanpropanoate(out) + a dicarboxylate(in) = 3-carboxy-4-methyl-5-propyl-2-furanpropanoate(in) + a dicarboxylate(out). It carries out the reaction (6R)-L-erythro-5,6,7,8-tetrahydrobiopterin(out) + a dicarboxylate(in) = (6R)-L-erythro-5,6,7,8-tetrahydrobiopterin(in) + a dicarboxylate(out). It catalyses the reaction L-erythro-7,8-dihydrobiopterin(out) + a dicarboxylate(in) = L-erythro-7,8-dihydrobiopterin(in) + a dicarboxylate(out). The catalysed reaction is L-sepiapterin(out) + a dicarboxylate(in) = L-sepiapterin(in) + a dicarboxylate(out). Its function is as follows. Functions as an organic anion/dicarboxylate exchanger that couples organic anion uptake indirectly to the sodium gradient. Transports organic anions such as estrone 3-sulfate (E1S) and urate in exchange for dicarboxylates such as glutarate or ketoglutarate (2-oxoglutarate). Plays an important role in the excretion of endogenous and exogenous organic anions, especially from the kidney and the brain. E1S transport is pH- and chloride-dependent and may also involve E1S/cGMP exchange. Responsible for the transport of prostaglandin E2 (PGE2) and prostaglandin F2(alpha) (PGF2(alpha)) in the basolateral side of the renal tubule. Involved in the transport of neuroactive tryptophan metabolites kynurenate and xanthurenate. Functions as a biopterin transporters involved in the uptake and the secretion of coenzymes tetrahydrobiopterin (BH4), dihydrobiopterin (BH2) and sepiapterin to urine, thereby determining baseline levels of blood biopterins. May be involved in the basolateral transport of steviol, a metabolite of the popular sugar substitute stevioside. May participate in the detoxification/ renal excretion of drugs and xenobiotics, such as the histamine H(2)-receptor antagonists fexofenadine and cimetidine, the antibiotic benzylpenicillin (PCG), the anionic herbicide 2,4-dichloro-phenoxyacetate (2,4-D), the diagnostic agent p-aminohippurate (PAH), the antiviral acyclovir (ACV), and the mycotoxin ochratoxin (OTA), by transporting these exogenous organic anions across the cell membrane in exchange for dicarboxylates such as 2-oxoglutarate. Contributes to the renal uptake of potent uremic toxins (indoxyl sulfate (IS), indole acetate (IA), hippurate/N-benzoylglycine (HA) and 3-carboxy-4-methyl-5-propyl-2-furanpropionate (CMPF)), pravastatin, PCG, E1S and dehydroepiandrosterone sulfate (DHEAS), and is partly involved in the renal uptake of temocaprilat (an angiotensin-converting enzyme (ACE) inhibitor). May contribute to the release of cortisol in the adrenals. Involved in one of the detoxification systems on the choroid plexus (CP), removes substrates such as E1S or taurocholate (TC), PCG, 2,4-D and PAH, from the cerebrospinal fluid (CSF) to the blood for eventual excretion in urine and bile. Regulates the CSF concentration of histamine H(2)-receptor antagonists cimetidine and ranitidine at the CP. Also contributes to the uptake of several other organic compounds such as the prostanoids prostaglandin E(2) and prostaglandin F(2-alpha), L-carnitine, and the therapeutic drugs allopurinol, 6-mercaptopurine (6-MP) and 5-fluorouracil (5-FU). Mediates the uptake from brain of organic anions, such as E1S, PAH, and OTA. Mediates the transport of PAH, PCG, and the statins pravastatin and pitavastatin, from the cerebrum into the blood circulation across the blood-brain barrier (BBB). In summary, plays a role in the efflux of drugs and xenobiotics, helping reduce their undesired toxicological effects on the body. In Rattus norvegicus (Rat), this protein is Organic anion transporter 3 (Slc22a8).